The following is a 75-amino-acid chain: RNA-binding protein KhpA (75 aa).

The KH domain occupies 29–75 (KKVYEIVVNEEDVGQVIGKDGRTIKSLKILLSALMGDSKEITIKVVR).

This sequence belongs to the KhpA RNA-binding protein family. As to quaternary structure, forms a complex with KhpB.

The protein localises to the cytoplasm. Functionally, a probable RNA chaperone. Forms a complex with KhpB which binds to cellular RNA and controls its expression. Plays a role in peptidoglycan (PG) homeostasis and cell length regulation. This is RNA-binding protein KhpA from Thermotoga maritima (strain ATCC 43589 / DSM 3109 / JCM 10099 / NBRC 100826 / MSB8).